Consider the following 374-residue polypeptide: dTDP-3-amino-3,4,6-trideoxy-alpha-D-glucose transaminase (374 aa).

Pyridoxal 5'-phosphate-binding positions include Gly60, Gln160, 181–186 (SFYPTK), Tyr214, Tyr221, 229–231 (NSR), and Tyr316. Position 186 is an N6-(pyridoxal phosphate)lysine (Lys186).

Belongs to the degT/dnrJ/eryC1 family. Pyridoxal 5'-phosphate is required as a cofactor.

It carries out the reaction dTDP-3-amino-3,4,6-trideoxy-alpha-D-glucose + 2-oxoglutarate = dTDP-3-dehydro-4,6-dideoxy-alpha-D-glucose + L-glutamate. Its pathway is antibiotic biosynthesis. In terms of biological role, involved in the biosynthesis of the amino sugar dTDP-L-megosamine which is found in the macrolide antibiotic and antiparasitic megalomicin A. Catalyzes the reversible transfer of the amino group from L-glutamate to the C-3 position of dTDP-3-keto-4,6-deoxyglucose to yield dTDP-3-amino-3,4,6-trideoxyglucose. The chain is dTDP-3-amino-3,4,6-trideoxy-alpha-D-glucose transaminase from Micromonospora megalomicea subsp. nigra.